Consider the following 384-residue polypeptide: Inactive lipoate--protein ligase 2 (384 aa).

One can recognise a BPL/LPL catalytic domain in the interval 79–303 (NESKGNECIF…HIKHIINYKN (225 aa)).

The protein resides in the mitochondrion. It localises to the plastid. The protein localises to the apicoplast. In terms of biological role, in the mitochondrion and together with LipL1, involved in the lipoylation of the E2 component of the branched chain alpha-ketoacid dehydrogenase complex BCKDH-E2/BCDH and the E2 component of the alpha -ketoglutarate dehydrogenase complex KDH. LipL1 is responsible for catalysing the activation of lipoate, forming lipoyl-AMP while LipL2 is required but is not capable of catalyzing this reaction. Although its role is unclear, it may catalyze the transfer of lipoyl groups from lipoyl-AMP to BCDH and KDH or act as an effector protein. This chain is Inactive lipoate--protein ligase 2, found in Plasmodium falciparum (isolate 3D7).